The sequence spans 81 residues: Cytotoxin 1a (81 aa).

The signal sequence occupies residues 1–21 (MKTLLLTLVVVTIVCLDLGYT). 4 cysteine pairs are disulfide-bonded: cysteine 24–cysteine 42, cysteine 35–cysteine 59, cysteine 63–cysteine 74, and cysteine 75–cysteine 80.

The protein belongs to the three-finger toxin family. Short-chain subfamily. Type IA cytotoxin sub-subfamily. In terms of assembly, monomer in solution; Homodimer and oligomer in the presence of negatively charged lipids forming a pore with a size ranging between 20 and 30 Angstroms. In terms of tissue distribution, expressed by the venom gland.

The protein resides in the secreted. It is found in the target cell membrane. Its function is as follows. Shows cytolytic activity on many different cells by forming pore in lipid membranes. In vivo, increases heart rate or kills the animal by cardiac arrest. In addition, it binds to heparin with high affinity, interacts with Kv channel-interacting protein 1 (KCNIP1) in a calcium-independent manner, and binds to integrin alpha-V/beta-3 (ITGAV/ITGB3) with moderate affinity. This Naja atra (Chinese cobra) protein is Cytotoxin 1a.